The chain runs to 1269 residues: Histone-lysine N-methyltransferase SETDB1 (1269 aa).

Residues 9 to 63 are a coiled coil; sequence KELGISMDDLRELIDRELEKIEFVKQRKAQLLEMEQLVKQKEAEVDHVDKLFDNA. Disordered regions lie at residues 85-121 and 153-188; these read YKESSSEDEGSSKPTEVIEIPDEDDDDVMSVGSGEAV and QKKSDGPQTRFSSHPSSPTSSVGGSNQASASNDMSK. The span at 103 to 112 shows a compositional bias: acidic residues; sequence EIPDEDDDDV. The span at 164–177 shows a compositional bias: low complexity; it reads SSHPSSPTSSVGGS. 2 Tudor domains span residues 250 to 312 and 340 to 395; these read ENLT…RPWS and VLLK…MFSM. Polar residues predominate over residues 396 to 414; sequence KTSNASTQEKQQAGQQRTR. The segment at 396 to 516 is disordered; sequence KTSNASTQEK…FQSNQSVQPV (121 aa). Positions 462-476 are enriched in low complexity; that stretch reads DSQQAQSKKQVAKKS. Polar residues predominate over residues 486-497; that stretch reads SGQSSPIPTESV. An MBD domain is found at 620 to 691; it reads HRGKNPLLVP…EMFCLDPYVL (72 aa). Residues 753 to 826 form the Pre-SET domain; that stretch reads VGCDCTDGCR…MCNNRLVQHG (74 aa). Positions 755, 757, 761, 767, 769, 807, 811, 813, and 818 each coordinate Zn(2+). In terms of domain architecture, SET spans 829–1244; the sequence is VRLQLFKTQN…AGTELTWDYN (416 aa). S-adenosyl-L-methionine contacts are provided by residues 839-841, Asp-877, and Tyr-879; that span reads KGW. The interval 894-1139 is disordered; sequence EGYESDAKSS…VAASAGPVKR (246 aa). A compositionally biased stretch (acidic residues) spans 919–932; the sequence is SGSEDQEESNDSSD. Basic and acidic residues-rich tracts occupy residues 968-989 and 1021-1033; these read ASKDSRTRDETTDCKLPEETSK and ETDKPKESEEASK. Residues 1078–1094 show a composition bias toward low complexity; it reads TEEVLTLSSSSDSEVGS. Over residues 1106–1120 the composition is skewed to polar residues; that stretch reads ATANDSDDIQTISSG. S-adenosyl-L-methionine contacts are provided by residues Arg-1198 and 1201–1202; that span reads NH. Zn(2+) contacts are provided by Cys-1204, Cys-1257, Cys-1259, and Cys-1264. A Post-SET domain is found at 1253–1269; that stretch reads KKLLCCCGSTECRGRLL.

It belongs to the class V-like SAM-binding methyltransferase superfamily. Histone-lysine methyltransferase family. Suvar3-9 subfamily.

The protein resides in the nucleus. It localises to the chromosome. The enzyme catalyses N(6),N(6)-dimethyl-L-lysyl(9)-[histone H3] + S-adenosyl-L-methionine = N(6),N(6),N(6)-trimethyl-L-lysyl(9)-[histone H3] + S-adenosyl-L-homocysteine + H(+). Histone methyltransferase that specifically trimethylates 'Lys-9' of histone H3. H3 'Lys-9' trimethylation represents a specific tag for epigenetic transcriptional repression by recruiting HP1 (CBX1, CBX3 and/or CBX5) proteins to methylated histones. Mainly functions in euchromatin regions, thereby playing a central role in the silencing of euchromatic genes. H3 'Lys-9' trimethylation is coordinated with DNA methylation. Plays a role in promoter hypermethylation and transcriptional silencing of tumor suppressor genes (TSGs) or other tumor-related genes. Also required to maintain a transcriptionally repressive state of genes in undifferentiated embryonic stem cells (ESCs). Associates at promoter regions of tumor suppressor genes (TSGs) leading to their gene silencing. The sequence is that of Histone-lysine N-methyltransferase SETDB1 (setdb1) from Xenopus laevis (African clawed frog).